Consider the following 363-residue polypeptide: Probable L-tyrosine/L-aspartate decarboxylase (363 aa).

Lys208 is subject to N6-(pyridoxal phosphate)lysine.

The protein belongs to the group II decarboxylase family. MfnA subfamily. It depends on pyridoxal 5'-phosphate as a cofactor.

The catalysed reaction is L-tyrosine + H(+) = tyramine + CO2. It carries out the reaction L-aspartate + H(+) = beta-alanine + CO2. It functions in the pathway cofactor biosynthesis; methanofuran biosynthesis. Its pathway is cofactor biosynthesis; coenzyme A biosynthesis. Its function is as follows. Catalyzes the decarboxylation of L-tyrosine to produce tyramine for methanofuran biosynthesis. Can also catalyze the decarboxylation of L-aspartate to produce beta-alanine for coenzyme A (CoA) biosynthesis. In Methanothermobacter thermautotrophicus (strain ATCC 29096 / DSM 1053 / JCM 10044 / NBRC 100330 / Delta H) (Methanobacterium thermoautotrophicum), this protein is Probable L-tyrosine/L-aspartate decarboxylase.